The chain runs to 208 residues: Pyridoxine/pyridoxamine 5'-phosphate oxidase (208 aa).

FMN-binding positions include 55–60, 70–71, K76, K77, and Q99; these read RMVLLK and YT. Substrate is bound at residue K60. Substrate is bound by residues Y117, R121, and S125. FMN-binding positions include 134 to 135 and W179; that span reads QS. 185–187 is a binding site for substrate; that stretch reads RLH. R189 serves as a coordination point for FMN.

The protein belongs to the pyridoxamine 5'-phosphate oxidase family. In terms of assembly, homodimer. FMN serves as cofactor.

The catalysed reaction is pyridoxamine 5'-phosphate + O2 + H2O = pyridoxal 5'-phosphate + H2O2 + NH4(+). It catalyses the reaction pyridoxine 5'-phosphate + O2 = pyridoxal 5'-phosphate + H2O2. It functions in the pathway cofactor metabolism; pyridoxal 5'-phosphate salvage; pyridoxal 5'-phosphate from pyridoxamine 5'-phosphate: step 1/1. It participates in cofactor metabolism; pyridoxal 5'-phosphate salvage; pyridoxal 5'-phosphate from pyridoxine 5'-phosphate: step 1/1. In terms of biological role, catalyzes the oxidation of either pyridoxine 5'-phosphate (PNP) or pyridoxamine 5'-phosphate (PMP) into pyridoxal 5'-phosphate (PLP). This chain is Pyridoxine/pyridoxamine 5'-phosphate oxidase, found in Brucella abortus biovar 1 (strain 9-941).